A 570-amino-acid chain; its full sequence is Interleukin-1 receptor accessory protein (570 aa).

Positions 1-20 (MGLPWCLMSLFFCGILQSHA) are cleaved as a signal peptide. Ig-like C2-type domains are found at residues 21–128 (SERC…VAFP), 141–230 (PMRL…RTMT), and 243–348 (PHIY…AKVK). At 21–367 (SERCDDWGLD…VELACGFGAT (347 aa)) the chain is on the extracellular side. Intrachain disulfides connect C24-C122, C47-C114, C137-C181, C160-C212, and C266-C332. The N-linked (GlcNAc...) asparagine glycan is linked to N57. Positions 69-85 (IWYWTRQDRDLEEPINF) are essential for interaction with PTPRD. N107, N111, N118, N157, N196, and N209 each carry an N-linked (GlcNAc...) asparagine glycan. Residues 368-388 (VFLVVVLIVVYHVYWLEMVLF) form a helical membrane-spanning segment. Residues 389–570 (YRAHFGTDET…GLSYSSLKNV (182 aa)) lie on the Cytoplasmic side of the membrane. The region spanning 403–546 (KEYDIYVSYA…RFWKQLQVAM (144 aa)) is the TIR domain. E482 is a catalytic residue. The tract at residues 550–570 (KSPRWSSSDKQGLSYSSLKNV) is disordered. A compositionally biased stretch (polar residues) spans 553-570 (RWSSSDKQGLSYSSLKNV). S557 carries the phosphoserine modification.

Belongs to the interleukin-1 receptor family. In terms of assembly, the interleukin-36 receptor complex is a heterodimer of IL1RL2 and IL1RAP; the association is inhibited by IL36RN. The interleukin-1 receptor complex is a heterodimer of IL1R1 and IL1RAP. Associates with IL1R2 to form a non-signaling interleukin-1 receptor complex. Interacts with IL-33-bound IL1RL1 to form the minimal interleukin-33 signaling complex with a 1:1:1 stoichiometry. Interacts with KIT (independently of stimulation with KITLG/SCF). A mast cell-specific KITLG/SCF-induced interleukin-33 signaling complex contains IL1RL1, IL1RAP, KIT and MYD88. Interacts (via the first immunoglobilin domain) with PTPRD (via the third immunoglobilin domain); induces pre- and postsynaptic differentiation of neurons. In terms of tissue distribution, highly expressed in hypothalamus, in the dentate gyrus of hippocampus, cerebral cortex, cerebellum, liver and lung.

It is found in the membrane. The enzyme catalyses NAD(+) + H2O = ADP-D-ribose + nicotinamide + H(+). Its function is as follows. Coreceptor for IL1RL2 in the IL-36 signaling system. Coreceptor with IL1R1 in the IL-1 signaling system. Associates with IL1R1 bound to IL1B to form the high affinity interleukin-1 receptor complex which mediates interleukin-1-dependent activation of NF-kappa-B and other pathways. Signaling involves the recruitment of adapter molecules such as TOLLIP, MYD88, and IRAK1 or IRAK2 via the respective TIR domains of the receptor/coreceptor subunits. Recruits TOLLIP to the signaling complex. Does not bind to interleukin-1 alone; binding of IL1RN to IL1R1, prevents its association with IL1R1 to form a signaling complex. The cellular response is modulated through a non-signaling association with the membrane IL1R2 decoy receptor. Coreceptor for IL1RL1 in the IL-33 signaling system. Can bidirectionally induce pre- and postsynaptic differentiation of neurons by trans-synaptically binding to PTPRD. May play a role in IL1B-mediated costimulation of IFNG production from T-helper 1 (Th1) cells. The chain is Interleukin-1 receptor accessory protein (Il1rap) from Rattus norvegicus (Rat).